The sequence spans 537 residues: NAD(P)H-quinone oxidoreductase chain 4 3 (537 aa).

A run of 13 helical transmembrane segments spans residues 6-26 (FPWL…IPII), 36-56 (WYGL…FWHY), 87-107 (LSMP…FAAW), 115-135 (LFYG…VAQD), 136-156 (LLLF…LISI), 169-189 (FILY…ALAF), 209-229 (AIEL…LPIF), 243-263 (SAPG…YALI), 277-297 (FAPV…CCAF), 314-334 (MGFV…GAVL), 335-355 (QMVS…VTYE), 387-407 (LALP…GIAT), and 417-437 (VVVV…LLSL).

This sequence belongs to the complex I subunit 4 family.

The protein resides in the cellular thylakoid membrane. It catalyses the reaction a plastoquinone + NADH + (n+1) H(+)(in) = a plastoquinol + NAD(+) + n H(+)(out). The enzyme catalyses a plastoquinone + NADPH + (n+1) H(+)(in) = a plastoquinol + NADP(+) + n H(+)(out). In terms of biological role, NDH-1 shuttles electrons from NAD(P)H, via FMN and iron-sulfur (Fe-S) centers, to quinones in the respiratory chain. The immediate electron acceptor for the enzyme in this species is believed to be plastoquinone. Couples the redox reaction to proton translocation (for every two electrons transferred, four hydrogen ions are translocated across the cytoplasmic membrane), and thus conserves the redox energy in a proton gradient. This chain is NAD(P)H-quinone oxidoreductase chain 4 3, found in Trichormus variabilis (strain ATCC 29413 / PCC 7937) (Anabaena variabilis).